The primary structure comprises 488 residues: Ribulose bisphosphate carboxylase large chain (488 aa).

The substrate site is built by asparagine 127 and threonine 177. Lysine 179 serves as the catalytic Proton acceptor. Lysine 181 lines the substrate pocket. The Mg(2+) site is built by lysine 205, aspartate 207, and glutamate 208. Residue lysine 205 is modified to N6-carboxylysine. The Proton acceptor role is filled by histidine 297. Residues arginine 298, histidine 330, and serine 382 each coordinate substrate.

This sequence belongs to the RuBisCO large chain family. Type I subfamily. Heterohexadecamer of 8 large chains and 8 small chains. Mg(2+) is required as a cofactor.

It localises to the plastid. The protein localises to the chloroplast. It carries out the reaction 2 (2R)-3-phosphoglycerate + 2 H(+) = D-ribulose 1,5-bisphosphate + CO2 + H2O. It catalyses the reaction D-ribulose 1,5-bisphosphate + O2 = 2-phosphoglycolate + (2R)-3-phosphoglycerate + 2 H(+). Its function is as follows. RuBisCO catalyzes two reactions: the carboxylation of D-ribulose 1,5-bisphosphate, the primary event in carbon dioxide fixation, as well as the oxidative fragmentation of the pentose substrate in the photorespiration process. Both reactions occur simultaneously and in competition at the same active site. The chain is Ribulose bisphosphate carboxylase large chain from Chrysotila carterae (Marine alga).